The primary structure comprises 1299 residues: DNA-directed RNA polymerase subunit beta' (1299 aa).

Residues C60, C62, C75, and C78 each coordinate Zn(2+). The tract at residues 385 to 405 (GRRGRPVTGPGNRPLKSLSDM) is disordered. D535, D537, and D539 together coordinate Mg(2+). Residues C886, C962, C969, and C972 each coordinate Zn(2+).

This sequence belongs to the RNA polymerase beta' chain family. As to quaternary structure, the RNAP catalytic core consists of 2 alpha, 1 beta, 1 beta' and 1 omega subunit. When a sigma factor is associated with the core the holoenzyme is formed, which can initiate transcription. Mg(2+) is required as a cofactor. Zn(2+) serves as cofactor.

It catalyses the reaction RNA(n) + a ribonucleoside 5'-triphosphate = RNA(n+1) + diphosphate. DNA-dependent RNA polymerase catalyzes the transcription of DNA into RNA using the four ribonucleoside triphosphates as substrates. The chain is DNA-directed RNA polymerase subunit beta' from Streptomyces coelicolor (strain ATCC BAA-471 / A3(2) / M145).